The sequence spans 975 residues: Glycine dehydrogenase (decarboxylating) (975 aa).

At Lys723 the chain carries N6-(pyridoxal phosphate)lysine.

Belongs to the GcvP family. As to quaternary structure, the glycine cleavage system is composed of four proteins: P, T, L and H. Pyridoxal 5'-phosphate serves as cofactor.

It catalyses the reaction N(6)-[(R)-lipoyl]-L-lysyl-[glycine-cleavage complex H protein] + glycine + H(+) = N(6)-[(R)-S(8)-aminomethyldihydrolipoyl]-L-lysyl-[glycine-cleavage complex H protein] + CO2. The glycine cleavage system catalyzes the degradation of glycine. The P protein binds the alpha-amino group of glycine through its pyridoxal phosphate cofactor; CO(2) is released and the remaining methylamine moiety is then transferred to the lipoamide cofactor of the H protein. This chain is Glycine dehydrogenase (decarboxylating), found in Burkholderia multivorans (strain ATCC 17616 / 249).